Reading from the N-terminus, the 351-residue chain is MTKISKIIDELNNQQADAAWITTPLNVYYFTGYRSEPHERLFALLIKKDGKQVLFCPKMEVEEVKASPFTGEIVGYLDTENPFSLYPQTINKLLIESEHLTVARQKQLISGFNVNSFGDVDLTIKQLRNIKSEDEISKIRKAAELADKCIEIGVSYLKEGVTEREVVNHIEQTIKQYGVNEMSFDTMVLFGDHAASPHGTPGDRRLKSNEYVLFDLGVIYEHYCSDMTRTIKFGEPSKEAQEIYNIVLEAETSAIQAIKPGIPLKDIDHIARNIISEKGYGEYFPHRLGHGLGLQEHEYQDVSSTNSNLLEAGMVITIEPGIYVPGVAGVRIEDDILVTNEGYEVLTHYEK.

The Mn(2+) site is built by D215, D226, H290, E319, and E333.

Belongs to the peptidase M24B family. Mn(2+) serves as cofactor.

This is an uncharacterized protein from Staphylococcus aureus (strain MSSA476).